The primary structure comprises 73 residues: Capsid protein G8P (73 aa).

The N-terminal stretch at Met-1–Ala-23 is a signal peptide. Residues Ala-24–Tyr-44 lie on the Periplasmic side of the membrane. A helical transmembrane segment spans residues Ile-45–Phe-65. Topologically, residues Lys-66–Ser-73 are cytoplasmic.

The protein belongs to the inovirus capsid protein family. Homomultimerizes. There are several thousands of this protein in the phage capsid.

Its subcellular location is the virion. It is found in the host membrane. In terms of biological role, self assembles to form a helical capsid wrapping up the viral genomic DNA. The capsid displays a filamentous structure with a length of 760-1950 nm and a width of 6-8 nm. The virion assembly and budding take place at the host inner membrane. This chain is Capsid protein G8P (VIII), found in Escherichia coli (Bacteriophage f1).